A 158-amino-acid polypeptide reads, in one-letter code: SsrA-binding protein (158 aa).

Belongs to the SmpB family.

It localises to the cytoplasm. Functionally, required for rescue of stalled ribosomes mediated by trans-translation. Binds to transfer-messenger RNA (tmRNA), required for stable association of tmRNA with ribosomes. tmRNA and SmpB together mimic tRNA shape, replacing the anticodon stem-loop with SmpB. tmRNA is encoded by the ssrA gene; the 2 termini fold to resemble tRNA(Ala) and it encodes a 'tag peptide', a short internal open reading frame. During trans-translation Ala-aminoacylated tmRNA acts like a tRNA, entering the A-site of stalled ribosomes, displacing the stalled mRNA. The ribosome then switches to translate the ORF on the tmRNA; the nascent peptide is terminated with the 'tag peptide' encoded by the tmRNA and targeted for degradation. The ribosome is freed to recommence translation, which seems to be the essential function of trans-translation. In Psychrobacter sp. (strain PRwf-1), this protein is SsrA-binding protein.